Consider the following 169-residue polypeptide: Ribosome maturation factor RimM (169 aa).

One can recognise a PRC barrel domain in the interval 97 to 169; the sequence is EDEYYWADLV…TITADWGLDY (73 aa).

Belongs to the RimM family. In terms of assembly, binds ribosomal protein uS19.

The protein resides in the cytoplasm. Functionally, an accessory protein needed during the final step in the assembly of 30S ribosomal subunit, possibly for assembly of the head region. Essential for efficient processing of 16S rRNA. May be needed both before and after RbfA during the maturation of 16S rRNA. It has affinity for free ribosomal 30S subunits but not for 70S ribosomes. The sequence is that of Ribosome maturation factor RimM from Neisseria gonorrhoeae (strain ATCC 700825 / FA 1090).